The following is a 315-amino-acid chain: MPALSCRFYQHKFPEVDDVVMVNVRSIAEMGAYVSLLEYNNIEGMILLSELSRRRIRSINKLIRIGRNECVVVIRVDKDKGYIDLSKRRVSPEEALKCEDKFTKSKTVYSILRHVAEVLEYTKDEQLESLYQRTAWVFDEKYKKPGYGAYDAFKHAVSDPDVLDGLDLNEDERRVLIDNINRRLTPQAVKIRADIEVACYGYEGIDAVKDALRAGLSCSTENMPIKINLIAPPRYVMTTTTLERTEGLSVLNQAMSVIKERIEEKRGVFNVQMEPKVVTDTDETELARQLERLEKENAEVDGDDDAEEMEAKTED.

The S1 motif domain maps to Asp17 to Arg88. Ser49 and Ser52 each carry phosphoserine. The interval Arg292–Asp315 is disordered. Over residues Glu299 to Glu308 the composition is skewed to acidic residues.

It belongs to the eIF-2-alpha family. As to quaternary structure, eukaryotic translation initiation factor 2 eIF2 is a heterotrimeric complex composed of an alpha, a beta and a gamma subunit. Post-translationally, phosphorylation at Ser-49 and Ser-52 stabilizes the eIF-2/GDP/eIF2B complex and prevents GDP/GTP exchange reaction, thus impairing the recycling of eIF-2 between successive rounds of initiation and leading to global inhibition of translation, while concomitantly initiating the preferential translation of integrated stress response (ISR)-specific mRNAs.

The protein localises to the cytoplasm. Its subcellular location is the stress granule. It is found in the cytosol. With respect to regulation, activity is regulated by phosphorylation at Ser-49 and Ser-52, which stabilizes the eIF-2/GDP/eIF2B complex and prevents the eIF2B-mediated exchange of GDP for GTP, thereby preventing the formation of the 43S pre-initiation complex (PIC). This results in the global attenuation of 5' cap-dependent protein synthesis and concomitant translation of ISR-specific mRNAs that contain a short upstream open reading frame (uORF) in their 5' UTR. Functionally, functions in the early steps of protein synthesis by forming a ternary complex with GTP and initiator tRNA. This complex binds to a 40S ribosomal subunit, followed by mRNA binding to form a 43S pre-initiation complex. Junction of the 60S ribosomal subunit to form the 80S initiation complex is preceded by hydrolysis of the GTP bound to eIF-2 and release of an eIF-2-GDP binary complex. In order for eIF-2 to recycle and catalyze another round of initiation, the GDP bound to eIF-2 must exchange with GTP by way of a reaction catalyzed by eIF2B. EIF2S1/eIF2-alpha is a key component of the integrated stress response (ISR), required for adaptation to various stress: phosphorylation by metabolic-stress sensing protein kinases in response to stress converts EIF2S1/eIF-2-alpha in a global protein synthesis inhibitor, leading to a attenuation of cap-dependent translation, while concomitantly initiating the preferential translation of ISR-specific mRNAs, such as the transcriptional activators ATF4 and QRICH1. This is Eukaryotic translation initiation factor 2 subunit 1 (eif2s1) from Xenopus tropicalis (Western clawed frog).